The sequence spans 273 residues: Large ribosomal subunit protein uL2 (273 aa).

Residues 221–262 (RGTAMNPVDHPHGGGEGRNFGKHPVTPWGVQTKGKKTRHNKR) form a disordered region. Residues 253-262 (KGKKTRHNKR) are compositionally biased toward basic residues.

This sequence belongs to the universal ribosomal protein uL2 family. As to quaternary structure, part of the 50S ribosomal subunit. Forms a bridge to the 30S subunit in the 70S ribosome.

One of the primary rRNA binding proteins. Required for association of the 30S and 50S subunits to form the 70S ribosome, for tRNA binding and peptide bond formation. It has been suggested to have peptidyltransferase activity; this is somewhat controversial. Makes several contacts with the 16S rRNA in the 70S ribosome. The chain is Large ribosomal subunit protein uL2 from Aggregatibacter actinomycetemcomitans (Actinobacillus actinomycetemcomitans).